The following is a 592-amino-acid chain: Bifunctional purine biosynthesis protein ATIC (592 aa).

N-acetylmethionine is present on M1. The MGS-like domain occupies A2–C146. The tract at residues A2–S198 is IMP cyclohydrolase. IMP contacts are provided by residues S12 to K14, S34 to T37, R64 to T67, C101 to N102, and D125 to I126. The active-site Proton donor/acceptor; for FAICAR cyclization activity is K137. Residue K199 is modified to N6-acetyllysine. The AICAR formyltransferase stretch occupies residues K199 to H592. Residues R207 to Y208, H267, G316, D339, N431, and R451 each bind 5-amino-1-(5-phospho-beta-D-ribosyl)imidazole-4-carboxamide. Residue H267 is the Proton acceptor; for AICAR formyltransferase activity of the active site. Residue I452 coordinates (6R)-10-formyltetrahydrofolate. F541 provides a ligand contact to 5-amino-1-(5-phospho-beta-D-ribosyl)imidazole-4-carboxamide. Residues D546 and S565–A566 each bind (6R)-10-formyltetrahydrofolate. R588 serves as a coordination point for 5-amino-1-(5-phospho-beta-D-ribosyl)imidazole-4-carboxamide.

This sequence belongs to the PurH family. As to quaternary structure, homodimer. Associates with internalized INSR complexes on Golgi/endosomal membranes. Interacts with INSR; ATIC together with PRKAA2/AMPK2 and HACD3/PTPLAD1 is proposed to be part of a signaling network regulating INSR autophosphorylation and endocytosis. As to expression, present in the heart, brain, placenta, lung, liver, skeletal muscle, kidney, pancreas.

Its subcellular location is the cytoplasm. The protein localises to the cytosol. The enzyme catalyses (6R)-10-formyltetrahydrofolate + 5-amino-1-(5-phospho-beta-D-ribosyl)imidazole-4-carboxamide = 5-formamido-1-(5-phospho-D-ribosyl)imidazole-4-carboxamide + (6S)-5,6,7,8-tetrahydrofolate. It carries out the reaction 10-formyldihydrofolate + 5-amino-1-(5-phospho-beta-D-ribosyl)imidazole-4-carboxamide = 5-formamido-1-(5-phospho-D-ribosyl)imidazole-4-carboxamide + 7,8-dihydrofolate. It catalyses the reaction IMP + H2O = 5-formamido-1-(5-phospho-D-ribosyl)imidazole-4-carboxamide. The catalysed reaction is 5-amino-1-(5-phospho-D-ribosyl)imidazole-4-thiocarboxamide + 10-formyldihydrofolate = 6-thio-IMP + 7,8-dihydrofolate + H2O. It functions in the pathway purine metabolism; IMP biosynthesis via de novo pathway; 5-formamido-1-(5-phospho-D-ribosyl)imidazole-4-carboxamide from 5-amino-1-(5-phospho-D-ribosyl)imidazole-4-carboxamide (10-formyl THF route): step 1/1. It participates in purine metabolism; IMP biosynthesis via de novo pathway; IMP from 5-formamido-1-(5-phospho-D-ribosyl)imidazole-4-carboxamide: step 1/1. AMP and XMP inhibit AICAR formyltransferase activity. AICAR formyltransferase activity is inhibited by N-(6-fluoro-1-oxo-1,2-dihydroisoquinolin-7-yl)-5- [(3R)-3-hydroxypyrrolidin-1-yl]thiophene-2-sulfonamide (LSN 3213128), which acts as a tumor suppression in cancer cell lines. Its function is as follows. Bifunctional enzyme that catalyzes the last two steps of purine biosynthesis. Acts as a transformylase that incorporates a formyl group to the AMP analog AICAR (5-amino-1-(5-phospho-beta-D-ribosyl)imidazole-4-carboxamide) to produce the intermediate formyl-AICAR (FAICAR). Can use both 10-formyldihydrofolate and 10-formyltetrahydrofolate as the formyl donor in this reaction. Also catalyzes the cyclization of FAICAR to inosine monophosphate (IMP). Is able to convert thio-AICAR to 6-mercaptopurine ribonucleotide, an inhibitor of purine biosynthesis used in the treatment of human leukemias. Promotes insulin receptor/INSR autophosphorylation and is involved in INSR internalization. In Homo sapiens (Human), this protein is Bifunctional purine biosynthesis protein ATIC.